Reading from the N-terminus, the 521-residue chain is Ribonuclease Y (521 aa).

Residues 3–23 (VSIWMLVITVLAAVAAYFAGS) traverse the membrane as a helical segment. One can recognise a KH domain in the interval 211 to 271 (TVSVVPLPSD…VRREVARMSL (61 aa)). One can recognise an HD domain in the interval 337–430 (IYQHSLEVAF…VQAADALSGA (94 aa)).

Belongs to the RNase Y family.

The protein localises to the cell membrane. Its function is as follows. Endoribonuclease that initiates mRNA decay. This is Ribonuclease Y from Pelobacter propionicus (strain DSM 2379 / NBRC 103807 / OttBd1).